A 275-amino-acid chain; its full sequence is Axoneme-associated protein mst101(3) (275 aa).

12 repeat units span residues 64-79 (KKKCAEAAKKEKEAAE), 80-95 (KKKCAEAAKKEKEAAE), 96-111 (KKKCAEAAKKEQEAAQ), 112-127 (KKKCAELAKKEKEAAE), 128-143 (KKKCAEAAKKEKEAAE), 144-159 (RKKCEEAAFKQKCEEA), 160-175 (AKKKKEAKKAAELQQK), 181-196 (KKEKEAEMMKKCEEAA), 197-212 (KKKAAEEAAKKKAEEV), 215-230 (KKKADEAAAKKKCAEA), 231-246 (KKKAEEAALKKMCEEA), and 249-264 (KKMCEEAALQKKCAEA). A 12 X 16 AA tandem repeats of [KRA]-K-[KEM]-[CKA]-[AEKD]-[EA]-[ALE]-[AMK]-[FKAML]-[KQA]-[EQKA]-[KQCEM]-[ECLA]-[AEQ]-[AEQ]-[EQAKV] region spans residues 64-264 (KKKCAEAAKK…AALQKKCAEA (201 aa)).

As to expression, testis.

Its subcellular location is the cytoplasm. In terms of biological role, possible structural role in the sperm tail. The chain is Axoneme-associated protein mst101(3) (mst101(3)) from Drosophila hydei (Fruit fly).